The sequence spans 509 residues: GMP synthase [glutamine-hydrolyzing] (509 aa).

Residues Asn4–Thr193 enclose the Glutamine amidotransferase type-1 domain. The active-site Nucleophile is the Cys79. Catalysis depends on residues His167 and Glu169. Residues Trp194–Arg384 enclose the GMPS ATP-PPase domain. Position 221–227 (Ser221–Thr227) interacts with ATP.

As to quaternary structure, homodimer.

The enzyme catalyses XMP + L-glutamine + ATP + H2O = GMP + L-glutamate + AMP + diphosphate + 2 H(+). The protein operates within purine metabolism; GMP biosynthesis; GMP from XMP (L-Gln route): step 1/1. Functionally, catalyzes the synthesis of GMP from XMP. The protein is GMP synthase [glutamine-hydrolyzing] of Christiangramia forsetii (strain DSM 17595 / CGMCC 1.15422 / KT0803) (Gramella forsetii).